The chain runs to 294 residues: Transcription termination/antitermination protein NusG (294 aa).

Residues 1–91 (MSDPNLNDAV…EEAEPAAPVD (91 aa)) are disordered. Residues 25–39 (DIVEAADSVDPDQAE) are compositionally biased toward acidic residues. Low complexity predominate over residues 40–53 (AADLAAGEPAERAA). Over residues 59-85 (DDSDEDDAAAEEAVEADDESADEEEAE) the composition is skewed to acidic residues.

This sequence belongs to the NusG family.

In terms of biological role, participates in transcription elongation, termination and antitermination. This Streptomyces griseus protein is Transcription termination/antitermination protein NusG.